A 345-amino-acid polypeptide reads, in one-letter code: NADH-quinone oxidoreductase subunit H (345 aa).

8 helical membrane-spanning segments follow: residues 13 to 33 (VIIL…LLFL), 84 to 104 (FILA…VIPF), 115 to 135 (VAIL…IMGG), 161 to 181 (IGLI…GDIV), 190 to 210 (LFNW…ISCL), 248 to 268 (YIAI…GWLS), 277 to 297 (PLWM…VKAI), and 309 to 329 (LGWK…AFAA).

Belongs to the complex I subunit 1 family. As to quaternary structure, NDH-1 is composed of 14 different subunits. Subunits NuoA, H, J, K, L, M, N constitute the membrane sector of the complex.

It localises to the cell inner membrane. The catalysed reaction is a quinone + NADH + 5 H(+)(in) = a quinol + NAD(+) + 4 H(+)(out). NDH-1 shuttles electrons from NADH, via FMN and iron-sulfur (Fe-S) centers, to quinones in the respiratory chain. The immediate electron acceptor for the enzyme in this species is believed to be ubiquinone. Couples the redox reaction to proton translocation (for every two electrons transferred, four hydrogen ions are translocated across the cytoplasmic membrane), and thus conserves the redox energy in a proton gradient. This subunit may bind ubiquinone. In Ruegeria sp. (strain TM1040) (Silicibacter sp.), this protein is NADH-quinone oxidoreductase subunit H.